Consider the following 339-residue polypeptide: Uroporphyrinogen decarboxylase (339 aa).

Substrate contacts are provided by residues 21–25, Asp71, Tyr147, Ser202, and His315; that span reads RQAGR.

The protein belongs to the uroporphyrinogen decarboxylase family. Homodimer.

Its subcellular location is the cytoplasm. The catalysed reaction is uroporphyrinogen III + 4 H(+) = coproporphyrinogen III + 4 CO2. It participates in porphyrin-containing compound metabolism; protoporphyrin-IX biosynthesis; coproporphyrinogen-III from 5-aminolevulinate: step 4/4. In terms of biological role, catalyzes the decarboxylation of four acetate groups of uroporphyrinogen-III to yield coproporphyrinogen-III. The chain is Uroporphyrinogen decarboxylase from Helicobacter acinonychis (strain Sheeba).